Consider the following 356-residue polypeptide: CLIP domain-containing serine protease C9 (356 aa).

Residues 49–94 (SCDTPQVIGGKCMNISLCDPAFVHSIAYQEHTPVCQQNAFYRVICC) form the Clip domain. Disulfide bonds link Cys50-Cys93, Cys60-Cys83, Cys66-Cys94, and Cys139-Cys155. A glycan (N-linked (GlcNAc...) asparagine) is linked at Asn62. The Peptidase S1 domain occupies 109–351 (IMHGIEAEPG…YFGWIKETVS (243 aa)). Residues His154 and Asp194 each act as charge relay system in the active site. Cys258 and Cys284 form a disulfide bridge. Asn292 carries N-linked (GlcNAc...) asparagine glycosylation. Cys300 and Cys328 are disulfide-bonded. Residue Ser304 is the Charge relay system of the active site.

Belongs to the peptidase S1 family. CLIP subfamily. In the active form, heterodimer of a p12 subunit and a p30 subunit; disulfide-linked. In terms of processing, secreted as a full-length protein. Following bacterium E.coli infection, proteolytically cleaved into two chains, p12 and p30, which remain covalently linked.

It localises to the secreted. In terms of biological role, probable serine protease which plays an essential role in the innate immune response against bacteria and protozoa infection by activating the melanization cascade. In the susceptible strain G3, appears to be dispensable for ookinete elimination which occurs by lysis. In Anopheles gambiae (African malaria mosquito), this protein is CLIP domain-containing serine protease C9.